Consider the following 561-residue polypeptide: Arf-GAP domain and FG repeat-containing protein 1 (561 aa).

The 125-residue stretch at 11–135 (EKHLKMLRDM…WYVPPEQAKV (125 aa)) folds into the Arf-GAP domain. The C4-type zinc-finger motif lies at 29–52 (CFDCDQRGPTYVNMTVGSFVCTSC). Ser167 is modified (phosphoserine). The interval 170–193 (ALHLNKGTPSQSPVVGRSQGQQQE) is disordered. Over residues 176-191 (GTPSQSPVVGRSQGQQ) the composition is skewed to polar residues. Thr177 is modified (phosphothreonine). 2 positions are modified to phosphoserine: Ser181 and Ser362. Ser367 is a glycosylation site (O-linked (GlcNAc) serine). The segment at 413-433 (SAQTQPASSGPAPFGATPSTN) is disordered.

Interacts with FCHO1. Interacts with EPS15R and EPS15. In terms of processing, O-glycosylated. Expressed in the testes (at protein level).

It localises to the nucleus. Its subcellular location is the cytoplasmic vesicle. Required for vesicle docking or fusion during acrosome biogenesis. May play a role in RNA trafficking or localization. This is Arf-GAP domain and FG repeat-containing protein 1 (Agfg1) from Mus musculus (Mouse).